Consider the following 67-residue polypeptide: Mu-conotoxin TsIIIA (67 aa).

Residues 1 to 20 (MMSKLGVLLTICLLLFPLTA) form the signal peptide. A propeptide spanning residues 21 to 48 (VPLDGDQPADQPAERKQNEQHPLFDQKR) is cleaved from the precursor. Disulfide bonds link C50–C59, C51–C64, and C55–C65.

The protein belongs to the conotoxin M superfamily. Expressed by the venom duct.

It is found in the secreted. Functionally, mu-conotoxins block voltage-gated sodium channels (Nav). This toxin specifically inhibits mammalian Nav1.8/SCN10A sodium currents (IC(50)=2.11 uM) without inducing a shift in the current-voltage relationship of this channel. In vivo, shows potent analgesic activity in a mice hotplate analgesic assay. In addition, this toxin has better analgesic effects than Ziconotide, an analgesic drug. The polypeptide is Mu-conotoxin TsIIIA (Conus tessulatus (Tessellate cone)).